The primary structure comprises 226 residues: Ribonuclease 3 (226 aa).

Positions 2-129 (IESISKIIKY…LIGAIYLDGG (128 aa)) constitute an RNase III domain. Residue E42 coordinates Mg(2+). Residue D46 is part of the active site. Mg(2+)-binding residues include N115 and E118. The active site involves E118. A DRBM domain is found at 154–223 (DAKTILQELV…ASLMLNQIHN (70 aa)).

This sequence belongs to the ribonuclease III family. As to quaternary structure, homodimer. The cofactor is Mg(2+).

Its subcellular location is the cytoplasm. The enzyme catalyses Endonucleolytic cleavage to 5'-phosphomonoester.. Functionally, digests double-stranded RNA. Involved in the processing of primary rRNA transcript to yield the immediate precursors to the large and small rRNAs (23S and 16S). Processes some mRNAs, and tRNAs when they are encoded in the rRNA operon. Processes pre-crRNA and tracrRNA of type II CRISPR loci if present in the organism. The polypeptide is Ribonuclease 3 (Ehrlichia chaffeensis (strain ATCC CRL-10679 / Arkansas)).